Consider the following 201-residue polypeptide: Rac-like GTP-binding protein ARAC2 (201 aa).

Position 13–20 (13–20 (GDGAVGKT)) interacts with GTP. Positions 35–43 (YVPTVFDNF) match the Effector region motif. Residues 60–64 (DTAGQ) and 118–121 (TKLD) contribute to the GTP site. Cys198 carries the cysteine methyl ester modification. Residue Cys198 is the site of S-geranylgeranyl cysteine attachment. Positions 199–201 (FFL) are cleaved as a propeptide — removed in mature form.

This sequence belongs to the small GTPase superfamily. Rho family. As to expression, expressed exclusively in the root, hypocotyl and stem.

It is found in the cytoplasm. The protein localises to the membrane. Inactive GDP-bound Rho GTPases reside in the cytosol, are found in a complex with Rho GDP-dissociation inhibitors (Rho GDIs), and are released from the GDI protein in order to translocate to membranes upon activation. The sequence is that of Rac-like GTP-binding protein ARAC2 (ARAC2) from Arabidopsis thaliana (Mouse-ear cress).